A 165-amino-acid chain; its full sequence is MNFLKKLLPQVATEVQQLSRSGFHTSSVCCRVQSGRYRITTKRNRPLTYEMANPPHFIGHRKSWNSWNTSTMKDALRPSQTAIEDVFIRKFVTGTWHALVCSEVIIKRQHNTIRIAALIRQAITPRKMYFLIGYTEELLSYWMQCPVTLELQTVGDKKDVVFKYI.

A mitochondrion-targeting transit peptide spans 1 to 30 (MNFLKKLLPQVATEVQQLSRSGFHTSSVCC).

It belongs to the universal ribosomal protein uS3 family. Component of the mitochondrial ribosome small subunit (28S) which comprises a 12S rRNA and about 30 distinct proteins.

The protein localises to the mitochondrion. In Drosophila melanogaster (Fruit fly), this protein is Small ribosomal subunit protein uS3m (mRpS24).